Reading from the N-terminus, the 190-residue chain is Lipid A acyltransferase PagP (190 aa).

Residues 1–29 (MYVAMIIRKYFLIIALLLMPWLAIPSVSA) form the signal peptide. Residues His-62, Asp-105, and Ser-106 contribute to the active site.

The protein belongs to the lipid A palmitoyltransferase family. As to quaternary structure, homodimer.

It is found in the cell outer membrane. It carries out the reaction a lipid A + a 1,2-diacyl-sn-glycero-3-phosphocholine = a hepta-acyl lipid A + a 2-acyl-sn-glycero-3-phosphocholine. The enzyme catalyses a lipid IVA + a 1,2-diacyl-sn-glycero-3-phosphocholine = a lipid IVB + a 2-acyl-sn-glycero-3-phosphocholine. It catalyses the reaction a lipid IIA + a 1,2-diacyl-sn-glycero-3-phosphocholine = a lipid IIB + a 2-acyl-sn-glycero-3-phosphocholine. In terms of biological role, transfers a fatty acid residue from the sn-1 position of a phospholipid to the N-linked hydroxyfatty acid chain on the proximal unit of lipid A or its precursors. Required for resistance to cationic antimicrobial peptides (CAMPs). Modifications of lipid A with an acyl chain allow to evade host immune defenses by resisting antimicrobial peptides and attenuating the inflammatory response to infection triggered by lipopolysaccharide through the Toll-like receptor 4 (TLR4) signal transduction pathway. The sequence is that of Lipid A acyltransferase PagP from Salmonella typhimurium (strain LT2 / SGSC1412 / ATCC 700720).